The following is a 202-amino-acid chain: dITP/XTP pyrophosphatase (202 aa).

7 to 12 (SNNPGK) contacts substrate. Mg(2+) contacts are provided by E39 and D68. Catalysis depends on D68, which acts as the Proton acceptor. Residues A69, 157–160 (FGFD), K180, and 185–186 (HR) contribute to the substrate site.

The protein belongs to the HAM1 NTPase family. Homodimer. Requires Mg(2+) as cofactor.

The enzyme catalyses XTP + H2O = XMP + diphosphate + H(+). The catalysed reaction is dITP + H2O = dIMP + diphosphate + H(+). It catalyses the reaction ITP + H2O = IMP + diphosphate + H(+). Its function is as follows. Pyrophosphatase that catalyzes the hydrolysis of nucleoside triphosphates to their monophosphate derivatives, with a high preference for the non-canonical purine nucleotides XTP (xanthosine triphosphate), dITP (deoxyinosine triphosphate) and ITP. Seems to function as a house-cleaning enzyme that removes non-canonical purine nucleotides from the nucleotide pool, thus preventing their incorporation into DNA/RNA and avoiding chromosomal lesions. The polypeptide is dITP/XTP pyrophosphatase (Polaromonas naphthalenivorans (strain CJ2)).